The sequence spans 528 residues: Cytochrome P450 monooxygenase vrcB (528 aa).

A helical membrane pass occupies residues 5–27 (YGLFFAAVALYSVALVIYRLYLH). Residue cysteine 470 participates in heme binding.

The protein belongs to the cytochrome P450 family. Heme serves as cofactor.

It localises to the membrane. It catalyses the reaction variecoladiene + 4 reduced [NADPH--hemoprotein reductase] + 4 O2 = variecolin + 4 oxidized [NADPH--hemoprotein reductase] + 6 H2O + 4 H(+). It functions in the pathway secondary metabolite biosynthesis; terpenoid biosynthesis. Its function is as follows. Cytochrome P450 monooxygenase; part of the gene cluster that mediates the biosynthesis of the sesterterpene variecolin. The first step in the pathway is performed by the variecoladiene synthase vrcA that possesses both prenyl transferase and terpene cyclase activity, converting isopentenyl diphosphate and dimethylallyl diphosphate into geranylfarnesyl pyrophosphate (GFPP) and then converting GFPP into the tetracyclic variecoladiene. The cytochrome P450 monooxygenase vrcB then catalyzes multiple oxidations at C-5 and C-20 positions to yield variecolin. This is Cytochrome P450 monooxygenase vrcB from Aspergillus aculeatus (strain ATCC 16872 / CBS 172.66 / WB 5094).